The primary structure comprises 247 residues: Sulfate transporter CysZ (247 aa).

A run of 5 helical transmembrane segments spans residues 29–49 (FVVL…FYLF), 66–86 (FLSW…LATF), 141–160 (LLYI…IPAL), 164–186 (VGPV…DYPF), and 212–232 (VLVS…PVAI).

The protein belongs to the CysZ family.

The protein resides in the cell inner membrane. Its function is as follows. High affinity, high specificity proton-dependent sulfate transporter, which mediates sulfate uptake. Provides the sulfur source for the cysteine synthesis pathway. In Vibrio parahaemolyticus serotype O3:K6 (strain RIMD 2210633), this protein is Sulfate transporter CysZ.